The chain runs to 224 residues: UPF0758 protein IL0240 (224 aa).

Residues 102–224 enclose the MPN domain; that stretch reads GFTEPTMVKD…PISFAERGLL (123 aa). Zn(2+) contacts are provided by His-173, His-175, and Asp-186. The short motif at 173–186 is the JAMM motif element; that stretch reads HNHPSGVAEPSQAD.

It belongs to the UPF0758 family.

In Idiomarina loihiensis (strain ATCC BAA-735 / DSM 15497 / L2-TR), this protein is UPF0758 protein IL0240.